The primary structure comprises 149 residues: Transcriptional repressor NrdR (149 aa).

A zinc finger lies at 3–34 (CPFCAAVDTKVIDSRLVSDGSQVRRRRQCLDC). Residues 49 to 139 (PRVIKSDEVR…VYRSFEDVRE (91 aa)) enclose the ATP-cone domain.

Belongs to the NrdR family. It depends on Zn(2+) as a cofactor.

Its function is as follows. Negatively regulates transcription of bacterial ribonucleotide reductase nrd genes and operons by binding to NrdR-boxes. This chain is Transcriptional repressor NrdR, found in Yersinia pseudotuberculosis serotype O:1b (strain IP 31758).